Consider the following 109-residue polypeptide: MYRTSRINNAPVVASQHDYDRDQIKRELNSLRRNVHDLCTRSGTSFDCNKFLRSDDMTPVVTTITPKRTADYKITEYVGDVKTIKPSNRPLVESGPLVREAAKYGECIV.

This is an uncharacterized protein from Autographa californica nuclear polyhedrosis virus (AcMNPV).